The sequence spans 73 residues: Salivary protein FS48 (73 aa).

An N-terminal signal peptide occupies residues Met1–Ala21.

The protein localises to the secreted. Functionally, salivary protein that inhibits host voltage-gated potassium channels Kv1.1/KCNA1, Kv1.2/KCNA2 and Kv1.3/KCNA3 likely via a voltage-independent pore-blocking mechanism. Suppresses expression of the Kv1.3/KCNA3 channel in lipopolysaccharide (LPS)-stimulated mouse macrophages and human T-cells. Down-regulates secretion of nitric oxide (NO) and inflammatory cytokines, such as TNF-alpha/TNF, IL-1beta/IL1B and IL6, in LPS-stimulated mouse macrophages in a manner dependent on Kv1.3/KCNA3 channel blockage. Reduces activation of MAPK and NF-kappa-B signaling pathways in LPS-stimulated mouse macrophages. Modulates intracellular Ca(2+) signaling in human PMA/ionomycin-triggered T-cells. Interferes with the activation of the MAPK, NF-kappa-B and NFATc1 pathways in human PMA/ionomycin-triggered T-cells. Reduces proliferation of human PMA/ionomycin-triggered T-cells. Down-regulates secretion of cytokines, such as TNF-alpha/TNF and IL2, in human PMA/ionomycin-triggered T-cells. The sequence is that of Salivary protein FS48 from Xenopsylla cheopis (Oriental rat flea).